Consider the following 268-residue polypeptide: Mitochondrial distribution and morphology protein 12 (268 aa).

In terms of domain architecture, SMP-LTD spans 1–266 (MSIDLEWCKL…FPNFHTIVMA (266 aa)). The interval 66–136 (EDDEEGSDRG…PPPAENPHPN (71 aa)) is disordered. Polar residues predominate over residues 102 to 111 (PATNVTSSLD). Over residues 112 to 121 (TRSDQPDDQK) the composition is skewed to basic and acidic residues.

The protein belongs to the MDM12 family. As to quaternary structure, component of the ER-mitochondria encounter structure (ERMES) or MDM complex, composed of MMM1, MDM10, MDM12 and MDM34. An MMM1 homodimer associates with one molecule of MDM12 on each side in a pairwise head-to-tail manner, and the SMP-LTD domains of MMM1 and MDM12 generate a continuous hydrophobic tunnel for phospholipid trafficking.

It is found in the mitochondrion outer membrane. The protein resides in the endoplasmic reticulum membrane. Component of the ERMES/MDM complex, which serves as a molecular tether to connect the endoplasmic reticulum (ER) and mitochondria. Components of this complex are involved in the control of mitochondrial shape and protein biogenesis, and function in nonvesicular lipid trafficking between the ER and mitochondria. MDM12 is required for the interaction of the ER-resident membrane protein MMM1 and the outer mitochondrial membrane-resident beta-barrel protein MDM10. The MDM12-MMM1 subcomplex functions in the major beta-barrel assembly pathway that is responsible for biogenesis of all mitochondrial outer membrane beta-barrel proteins, and acts in a late step after the SAM complex. The MDM10-MDM12-MMM1 subcomplex further acts in the TOM40-specific pathway after the action of the MDM12-MMM1 complex. Essential for establishing and maintaining the structure of mitochondria and maintenance of mtDNA nucleoids. This chain is Mitochondrial distribution and morphology protein 12, found in Laccaria bicolor (strain S238N-H82 / ATCC MYA-4686) (Bicoloured deceiver).